Consider the following 31-residue polypeptide: Cycloviolacin-O6 (31 aa).

A cross-link (cyclopeptide (Gly-Asn)) is located at residues Gly-1–Asn-31. 3 cysteine pairs are disulfide-bonded: Cys-5/Cys-21, Cys-9/Cys-23, and Cys-14/Cys-28.

Post-translationally, this is a cyclic peptide.

In terms of biological role, probably participates in a plant defense mechanism. This Viola odorata (Sweet violet) protein is Cycloviolacin-O6.